The sequence spans 312 residues: Zygote arrest protein 1.L (312 aa).

2 disordered regions span residues 79–133 and 150–205; these read RDVG…VRFP and FQDK…DQTR. Composition is skewed to polar residues over residues 86–95 and 113–128; these read NPRQDASVQC and PQQS…SPTK. Positions 152–196 are enriched in basic and acidic residues; it reads DKGENLSEKTEALRSEGSRGEGGRPEGKQEDGEIKEQTKMDKADQ. A 3CxxC-type zinc finger spans residues 214–297; that stretch reads KYGYYHCKDC…RQDLCGRCKG (84 aa).

It belongs to the ZAR1 family. Ovary.

It localises to the cytoplasm. The protein resides in the cytoplasmic ribonucleoprotein granule. Its function is as follows. mRNA-binding protein required for maternal mRNA storage, translation and degradation during oocyte maturation. Probably promotes formation of some phase-separated membraneless compartment that stores maternal mRNAs in oocytes: acts by undergoing liquid-liquid phase separation upon binding to maternal mRNAs. Binds to the 3'-UTR of maternal mRNAs in immature oocytes, inhibiting their translation. In Xenopus laevis (African clawed frog), this protein is Zygote arrest protein 1.L.